We begin with the raw amino-acid sequence, 343 residues long: UPF0324 membrane protein LJ_1117 (343 aa).

Transmembrane regions (helical) follow at residues 10–27, 32–54, 64–86, 91–113, 123–145, 157–179, 219–241, 262–284, 288–310, and 317–339; these read FGLAAVMTLICSVAGIFL, YVNLIGALVIALLLGISLQVLPV, IGFISNKFLRLGIILLGFRLNLT, AGIKTILVAMLGVSGTIVLTYWL, LAVLSACGCGICGAAAVMGVSPQ, NEVLAVAVVCVMGTVFTLLEIVI, ALIMKLSRVLLLAPVALIIGYWY, IPWFLGGFILTSILGTFLPFPPV, GLVQAAYVFLGMAMAALGISVNF, and GGTVFGAAAISSTCLMIFMIIMS.

Belongs to the UPF0324 family.

The protein resides in the cell membrane. In Lactobacillus johnsonii (strain CNCM I-12250 / La1 / NCC 533), this protein is UPF0324 membrane protein LJ_1117.